The following is a 362-amino-acid chain: Caspase activity and apoptosis inhibitor 1 (362 aa).

The segment covering 1-14 has biased composition (basic residues); it reads MTGKKSSREKRRKR. Disordered stretches follow at residues 1-44 and 65-101; these read MTGK…SGCG and TGGGSGGSCWGGSSVERGERRKRRSTDSSSSVSGSLQ. Residues 19–32 show a composition bias toward low complexity; the sequence is AAAALAAPDLVPAV. 2 stretches are compositionally biased toward gly residues: residues 33-44 and 65-74; these read GGSGSGSTSGCG and TGGGSGGSCW. Ser-89 bears the Phosphoserine mark. Position 90 is a phosphothreonine (Thr-90). Lys-105 participates in a covalent cross-link: Glycyl lysine isopeptide (Lys-Gly) (interchain with G-Cter in SUMO2). 2 positions are modified to phosphoserine: Ser-121 and Ser-204. Disordered stretches follow at residues 226–251, 269–291, and 309–332; these read SCVDSTSSLRENKQPEGLELKQGKGE, GPCNEEAAAPEVPENTVQSEAGQ, and LAESSPKEPKAATLTVPPPEDVQP. A compositionally biased stretch (basic and acidic residues) spans 235 to 251; sequence RENKQPEGLELKQGKGE. Positions 273–282 are enriched in low complexity; sequence EEAAAPEVPE. Residues 282 to 312 are a coiled coil; that stretch reads ENTVQSEAGQIDDLEKDIEKSVNEILGLAES. Ser-313 is modified (phosphoserine).

Functionally, anti-apoptotic protein that modulates a caspase-10 dependent mitochondrial caspase-3/9 feedback amplification loop. This is Caspase activity and apoptosis inhibitor 1 (CAAP1) from Bos taurus (Bovine).